The primary structure comprises 466 residues: Asparagine--tRNA ligase (466 aa).

The protein belongs to the class-II aminoacyl-tRNA synthetase family. As to quaternary structure, homodimer.

The protein localises to the cytoplasm. It carries out the reaction tRNA(Asn) + L-asparagine + ATP = L-asparaginyl-tRNA(Asn) + AMP + diphosphate + H(+). In Yersinia pseudotuberculosis serotype O:1b (strain IP 31758), this protein is Asparagine--tRNA ligase.